Here is a 331-residue protein sequence, read N- to C-terminus: MEVTGDAGVPESGEIRTLKPCLLRRNYSREQHGVAASCLEDLRSKACDILAIDKSLTPVTLVLAEDGTIVDDDDYFLCLPSNTKFVALASNEKWAYNNSDGGTAWISQESFDVDETDSGAGLKWKNVARQLKEDLSSIILLSEEDLQMLVDAPCSDLAQELRQSCATVQRLQHTLQQVLDQREEVRQSKQLLQLYLQALEKEGSLLSKQEESKAAFGEEVDAVDTGISRETSSDVALASHILTALREKQAPELSLSSQDLELVTKEDPKALAVALNWDIKKTETVQEACERELALRLQQTQSLHSLRSISASKASPPGDLQNPKRARQDPT.

The residue at position 1 (M1) is an N-acetylmethionine. In terms of domain architecture, CIDE-N spans 17 to 96 (TLKPCLLRRN…ALASNEKWAY (80 aa)). T243 carries the post-translational modification Phosphothreonine. A disordered region spans residues 305–331 (SLRSISASKASPPGDLQNPKRARQDPT). S315 carries the post-translational modification Phosphoserine.

In terms of assembly, heterodimer of DFFA and DFFB. In terms of processing, caspase-3 cleaves DFF45 at 2 sites to generate an active factor.

It localises to the cytoplasm. Its function is as follows. Inhibitor of the caspase-activated DNase (DFF40). The protein is DNA fragmentation factor subunit alpha (DFFA) of Homo sapiens (Human).